A 64-amino-acid chain; its full sequence is MGKIFFFVLMIAIIGSTFLIEEALGSLVGCPRPNFLPSWNRCKCICKNNKPMCRKLPNLLKTTA.

An N-terminal signal peptide occupies residues 1-25 (MGKIFFFVLMIAIIGSTFLIEEALG).

Belongs to the ant myrmeciitoxin-01 family. Homodimer; disulfide-linked. In terms of processing, contains 2 intrachain disulfide bonds (per chain) and 1 interchain disulfide bond. Expressed by the venom gland.

It localises to the secreted. May have antimicrobial properties, like most ant linear peptides. The polypeptide is U-myrmeciitoxin(01)-Mg4b (Myrmecia gulosa (Red bulldog ant)).